The following is a 194-amino-acid chain: RNA pyrophosphohydrolase (194 aa).

The Nudix hydrolase domain maps to 6 to 149; the sequence is GFRPNVGIIL…KRDVYQRALQ (144 aa). The Nudix box signature appears at 38-59; sequence GGIKFGETPEQAMYRELEEEVG. Residues 158–194 form a disordered region; the sequence is PTQHVPPQHNTARYLRQTHASRKPDEPSTEKTKPDNE. A compositionally biased stretch (basic and acidic residues) spans 179–194; the sequence is RKPDEPSTEKTKPDNE.

It belongs to the Nudix hydrolase family. RppH subfamily. A divalent metal cation is required as a cofactor.

Functionally, accelerates the degradation of transcripts by removing pyrophosphate from the 5'-end of triphosphorylated RNA, leading to a more labile monophosphorylated state that can stimulate subsequent ribonuclease cleavage. The protein is RNA pyrophosphohydrolase of Janthinobacterium sp. (strain Marseille) (Minibacterium massiliensis).